The following is a 387-amino-acid chain: Cysteine desulfurase (387 aa).

Pyridoxal 5'-phosphate contacts are provided by residues G72–T73, N152, Q180, and S200–H202. K203 is modified (N6-(pyridoxal phosphate)lysine). T238 contributes to the pyridoxal 5'-phosphate binding site. The active-site Cysteine persulfide intermediate is C326. C326 lines the [2Fe-2S] cluster pocket.

The protein belongs to the class-V pyridoxal-phosphate-dependent aminotransferase family. NifS/IscS subfamily. In terms of assembly, homodimer. Pyridoxal 5'-phosphate is required as a cofactor.

The catalysed reaction is (sulfur carrier)-H + L-cysteine = (sulfur carrier)-SH + L-alanine. Catalyzes the removal of elemental sulfur atoms from cysteine to produce alanine. Seems to participate in the biosynthesis of the nitrogenase metalloclusters by providing the inorganic sulfur required for the Fe-S core formation. The sequence is that of Cysteine desulfurase from Sinorhizobium fredii (strain NBRC 101917 / NGR234).